A 427-amino-acid polypeptide reads, in one-letter code: Acetylornithine aminotransferase, mitochondrial (427 aa).

Position 279 is an N6-(pyridoxal phosphate)lysine (Lys-279).

It belongs to the class-III pyridoxal-phosphate-dependent aminotransferase family. Requires pyridoxal 5'-phosphate as cofactor.

It is found in the mitochondrion matrix. The catalysed reaction is N(2)-acetyl-L-ornithine + 2-oxoglutarate = N-acetyl-L-glutamate 5-semialdehyde + L-glutamate. It functions in the pathway amino-acid biosynthesis; L-arginine biosynthesis; N(2)-acetyl-L-ornithine from L-glutamate: step 4/4. The polypeptide is Acetylornithine aminotransferase, mitochondrial (ARG8) (Candida glabrata (strain ATCC 2001 / BCRC 20586 / JCM 3761 / NBRC 0622 / NRRL Y-65 / CBS 138) (Yeast)).